The following is a 35-amino-acid chain: Photosystem II reaction center protein T (35 aa).

Residues 3–23 form a helical membrane-spanning segment; sequence ALVYTFLLVSTLGIIFFAIFF.

It belongs to the PsbT family. As to quaternary structure, PSII is composed of 1 copy each of membrane proteins PsbA, PsbB, PsbC, PsbD, PsbE, PsbF, PsbH, PsbI, PsbJ, PsbK, PsbL, PsbM, PsbT, PsbY, PsbZ, Psb30/Ycf12, at least 3 peripheral proteins of the oxygen-evolving complex and a large number of cofactors. It forms dimeric complexes.

Its subcellular location is the plastid. It localises to the chloroplast thylakoid membrane. Its function is as follows. Found at the monomer-monomer interface of the photosystem II (PS II) dimer, plays a role in assembly and dimerization of PSII. PSII is a light-driven water plastoquinone oxidoreductase, using light energy to abstract electrons from H(2)O, generating a proton gradient subsequently used for ATP formation. This chain is Photosystem II reaction center protein T, found in Citrus sinensis (Sweet orange).